A 507-amino-acid polypeptide reads, in one-letter code: L-threonine dehydratase biosynthetic IlvA (507 aa).

Position 52 is an N6-(pyridoxal phosphate)lysine (K52). Residues N79, 182–186 (GGGGL), and S309 each bind pyridoxal 5'-phosphate. ACT-like domains lie at 333 to 404 (AVFA…DLTH) and 427 to 498 (RLFR…EESA).

The protein belongs to the serine/threonine dehydratase family. As to quaternary structure, homotetramer. It depends on pyridoxal 5'-phosphate as a cofactor.

It carries out the reaction L-threonine = 2-oxobutanoate + NH4(+). It functions in the pathway amino-acid biosynthesis; L-isoleucine biosynthesis; 2-oxobutanoate from L-threonine: step 1/1. In terms of biological role, catalyzes the anaerobic formation of alpha-ketobutyrate and ammonia from threonine in a two-step reaction. The first step involved a dehydration of threonine and a production of enamine intermediates (aminocrotonate), which tautomerizes to its imine form (iminobutyrate). Both intermediates are unstable and short-lived. The second step is the nonenzymatic hydrolysis of the enamine/imine intermediates to form 2-ketobutyrate and free ammonia. In the low water environment of the cell, the second step is accelerated by RidA. This chain is L-threonine dehydratase biosynthetic IlvA (ilvA), found in Burkholderia multivorans (strain ATCC 17616 / 249).